We begin with the raw amino-acid sequence, 609 residues long: Protein KINESIN LIGHT CHAIN-RELATED 1 (609 aa).

The disordered stretch occupies residues methionine 1–proline 77. Residues lysine 38–serine 55 show a composition bias toward low complexity. TPR repeat units lie at residues alanine 140 to threonine 173, phenylalanine 183 to threonine 216, glycine 225 to histidine 258, alanine 267 to glycine 301, alanine 307 to serine 340, alanine 349 to proline 382, alanine 392 to lysine 425, alanine 433 to alanine 466, glycine 474 to glutamate 507, and leucine 516 to lysine 549. Residues leucine 582–phenylalanine 609 are disordered.

Belongs to the kinesin light chain family. In terms of assembly, interacts with IQD1.

Its subcellular location is the cytoplasm. The protein resides in the cytoskeleton. This is Protein KINESIN LIGHT CHAIN-RELATED 1 from Arabidopsis thaliana (Mouse-ear cress).